Reading from the N-terminus, the 616-residue chain is Dihydroxy-acid dehydratase (616 aa).

D81 contributes to the Mg(2+) binding site. C122 lines the [2Fe-2S] cluster pocket. Residues D123 and K124 each coordinate Mg(2+). An N6-carboxylysine modification is found at K124. C195 is a [2Fe-2S] cluster binding site. E491 contributes to the Mg(2+) binding site. The active-site Proton acceptor is the S517.

Belongs to the IlvD/Edd family. Homodimer. [2Fe-2S] cluster is required as a cofactor. The cofactor is Mg(2+).

It carries out the reaction (2R)-2,3-dihydroxy-3-methylbutanoate = 3-methyl-2-oxobutanoate + H2O. It catalyses the reaction (2R,3R)-2,3-dihydroxy-3-methylpentanoate = (S)-3-methyl-2-oxopentanoate + H2O. Its pathway is amino-acid biosynthesis; L-isoleucine biosynthesis; L-isoleucine from 2-oxobutanoate: step 3/4. It participates in amino-acid biosynthesis; L-valine biosynthesis; L-valine from pyruvate: step 3/4. In terms of biological role, functions in the biosynthesis of branched-chain amino acids. Catalyzes the dehydration of (2R,3R)-2,3-dihydroxy-3-methylpentanoate (2,3-dihydroxy-3-methylvalerate) into 2-oxo-3-methylpentanoate (2-oxo-3-methylvalerate) and of (2R)-2,3-dihydroxy-3-methylbutanoate (2,3-dihydroxyisovalerate) into 2-oxo-3-methylbutanoate (2-oxoisovalerate), the penultimate precursor to L-isoleucine and L-valine, respectively. This is Dihydroxy-acid dehydratase from Salmonella typhi.